The sequence spans 1113 residues: StAR-related lipid transfer protein 13 (1113 aa).

N-acetylmethionine is present on Met-1. The SAM domain occupies 55–122 (QQEIEAKEAC…LNKCASMKLD (68 aa)). Disordered stretches follow at residues 162-254 (LLPR…PTRA) and 307-346 (PNGDLQNSPPPACRKGLPCSGKSSGESSPSEHSSSGVSTP). Polar residues predominate over residues 177-188 (MRNTTSSESVLT). 2 stretches are compositionally biased toward low complexity: residues 197–213 (SIHSESSGGSDSRSQPG) and 326–344 (SGKSSGESSPSEHSSSGVS). Position 411 is a phosphoserine (Ser-411). The span at 536-549 (FEGNSVSEGRTTPS) shows a compositional bias: polar residues. The disordered stretch occupies residues 536–580 (FEGNSVSEGRTTPSDVERDVTSLNESEPPGVRDRRDSGVGASLTR). The region spanning 663–868 (VPLIVHVQRT…HMIMECDRLF (206 aa)) is the Rho-GAP domain. Residues 899 to 1107 (LEESGATFHT…RNSFQPLIAE (209 aa)) enclose the START domain.

Homodimer. Interacts with TAX1BP1. As to expression, ubiquitously expressed. Underexpressed in hepatocellular carcinoma cells and some breast cancer cell lines.

It localises to the cytoplasm. The protein resides in the membrane. The protein localises to the mitochondrion membrane. Its subcellular location is the lipid droplet. GTPase-activating protein for RhoA, and perhaps for Cdc42. May be involved in regulation of cytoskeletal reorganization, cell proliferation and cell motility. Acts a tumor suppressor in hepatocellular carcinoma cells. This is StAR-related lipid transfer protein 13 (STARD13) from Homo sapiens (Human).